Reading from the N-terminus, the 337-residue chain is Centromere protein N (337 aa).

2 positions are modified to phosphoserine: Ser226 and Ser233.

The protein belongs to the CENP-N/CHL4 family. Component of the CENPA-NAC complex, at least composed of CENPA, CENPC, CENPH, CENPM, CENPN, CENPT and CENPU. The CENPA-NAC complex interacts with the CENPA-CAD complex, composed of CENPI, CENPK, CENPL, CENPO, CENPP, CENPQ, CENPR and CENPS. Interacts directly with CENPA. Identified in a centromere complex containing histones H2A, H2B and H4, and at least CENPA, CENPB, CENPC, CENPT, CENPN, HJURP, SUPT16H, SSRP1 and RSF1.

The protein localises to the nucleus. It is found in the chromosome. Its subcellular location is the centromere. The protein resides in the kinetochore. Functionally, component of the CENPA-NAC (nucleosome-associated) complex, a complex that plays a central role in assembly of kinetochore proteins, mitotic progression and chromosome segregation. The CENPA-NAC complex recruits the CENPA-CAD (nucleosome distal) complex and may be involved in incorporation of newly synthesized CENPA into centromeres. CENPN is the first protein to bind specifically to CENPA nucleosomes and the direct binding of CENPA nucleosomes by CENPN is required for centromere assembly. Required for chromosome congression and efficiently align the chromosomes on a metaphase plate. This Mus musculus (Mouse) protein is Centromere protein N (Cenpn).